The sequence spans 138 residues: DNA-directed RNA polymerase subunit omega (138 aa).

Positions 104 to 138 are disordered; that stretch reads GNSDGLENSSNSRDDNPLGRDNFFSTPENRNNTNS. The span at 126–138 shows a compositional bias: polar residues; the sequence is FFSTPENRNNTNS.

It belongs to the RNA polymerase subunit omega family. In terms of assembly, the RNAP catalytic core consists of 2 alpha, 1 beta, 1 beta' and 1 omega subunit. When a sigma factor is associated with the core the holoenzyme is formed, which can initiate transcription.

It catalyses the reaction RNA(n) + a ribonucleoside 5'-triphosphate = RNA(n+1) + diphosphate. Its function is as follows. Promotes RNA polymerase assembly. Latches the N- and C-terminal regions of the beta' subunit thereby facilitating its interaction with the beta and alpha subunits. This Ehrlichia chaffeensis (strain ATCC CRL-10679 / Arkansas) protein is DNA-directed RNA polymerase subunit omega.